The primary structure comprises 90 residues: Small ribosomal subunit protein uS17 (90 aa).

It belongs to the universal ribosomal protein uS17 family. In terms of assembly, part of the 30S ribosomal subunit.

In terms of biological role, one of the primary rRNA binding proteins, it binds specifically to the 5'-end of 16S ribosomal RNA. The chain is Small ribosomal subunit protein uS17 from Burkholderia multivorans (strain ATCC 17616 / 249).